The sequence spans 385 residues: Gibberellin 20 oxidase 5 (385 aa).

In terms of domain architecture, Fe2OG dioxygenase spans 224 to 324 (DGSGIFRCNY…RRSLVFFSCP (101 aa)). H249, D251, and H305 together coordinate Fe cation. The active site involves R315.

Belongs to the iron/ascorbate-dependent oxidoreductase family. GA20OX subfamily. The cofactor is Fe(2+). L-ascorbate serves as cofactor. As to expression, expressed in 3-day-old seedlings and siliques. Detected in dry seeds, roots, old leaves and inflorescences.

It carries out the reaction gibberellin A12 + 2 2-oxoglutarate + 3 O2 + H(+) = gibberellin A9 + 2 succinate + 3 CO2 + 2 H2O. It catalyses the reaction gibberellin A53 + 2 2-oxoglutarate + 3 O2 + H(+) = gibberellin A20 + 2 succinate + 3 CO2 + 2 H2O. It participates in plant hormone biosynthesis; gibberellin biosynthesis. Key oxidase enzyme in the biosynthesis of gibberellin that catalyzes the conversion of GA12 and GA53 to GA9 and GA20 respectively, via a three-step oxidation at C-20 of the GA skeleton. The chain is Gibberellin 20 oxidase 5 (GA20OX5) from Arabidopsis thaliana (Mouse-ear cress).